Reading from the N-terminus, the 127-residue chain is Small ribosomal subunit protein uS13 (127 aa).

Basic residues predominate over residues 95-118 (GLPVRGQRTHTNARTRKGPKKGLV). The disordered stretch occupies residues 95 to 127 (GLPVRGQRTHTNARTRKGPKKGLVRKAAAPAPK).

This sequence belongs to the universal ribosomal protein uS13 family. As to quaternary structure, part of the 30S ribosomal subunit. Forms a loose heterodimer with protein S19. Forms two bridges to the 50S subunit in the 70S ribosome.

Functionally, located at the top of the head of the 30S subunit, it contacts several helices of the 16S rRNA. In the 70S ribosome it contacts the 23S rRNA (bridge B1a) and protein L5 of the 50S subunit (bridge B1b), connecting the 2 subunits; these bridges are implicated in subunit movement. Contacts the tRNAs in the A and P-sites. The protein is Small ribosomal subunit protein uS13 of Anaeromyxobacter sp. (strain Fw109-5).